A 167-amino-acid polypeptide reads, in one-letter code: MAPIKRGDRFPTTDDVYYIPPEGGEPGAFELSKFVKTKKFVVVSVPGAFTPPCTEQHLPGYIKNLPRILSKGVDFVLVITQNDPFVLKGWKKELGAADAKKLIFVSDPNLKLTKKLGSTIDLSSIGLGTRSGRLALIVNRSGIVEYAAIENGGEVDVSTAQKIIAKL.

Residues Ile-4–Leu-167 enclose the Thioredoxin domain. The active-site Cysteine sulfenic acid (-SOH) intermediate is Cys-53. Residues Ala-165–Leu-167 carry the Microbody targeting signal motif.

It belongs to the peroxiredoxin family. Prx5 subfamily.

The protein localises to the peroxisome membrane. The catalysed reaction is a hydroperoxide + [thioredoxin]-dithiol = an alcohol + [thioredoxin]-disulfide + H2O. In terms of biological role, thiol-specific peroxidase that catalyzes the reduction of hydrogen peroxide and organic hydroperoxides to water and alcohols, respectively. Plays a role in cell protection against oxidative stress by detoxifying peroxides and as sensor of hydrogen peroxide-mediated signaling events. The protein is Putative peroxiredoxin-B (PMPB) of Candida boidinii (Yeast).